The primary structure comprises 600 residues: UvrABC system protein C (600 aa).

Residues 15–100 (NSAGVYQYFN…IKQLHPKYNI (86 aa)) form the GIY-YIG domain. In terms of domain architecture, UVR spans 203–238 (SILIKNLEKQMLVLAQNENYEEAAKVRDQIVTIKDL).

It belongs to the UvrC family. In terms of assembly, interacts with UvrB in an incision complex.

Its subcellular location is the cytoplasm. The UvrABC repair system catalyzes the recognition and processing of DNA lesions. UvrC both incises the 5' and 3' sides of the lesion. The N-terminal half is responsible for the 3' incision and the C-terminal half is responsible for the 5' incision. This is UvrABC system protein C from Campylobacter jejuni subsp. jejuni serotype O:23/36 (strain 81-176).